A 251-amino-acid chain; its full sequence is 5'-nucleotidase SurE (251 aa).

Residues Asp-8, Asp-9, Ser-40, and Asn-95 each coordinate a divalent metal cation.

It belongs to the SurE nucleotidase family. It depends on a divalent metal cation as a cofactor.

It is found in the cytoplasm. It catalyses the reaction a ribonucleoside 5'-phosphate + H2O = a ribonucleoside + phosphate. Functionally, nucleotidase that shows phosphatase activity on nucleoside 5'-monophosphates. This Desulfitobacterium hafniense (strain DSM 10664 / DCB-2) protein is 5'-nucleotidase SurE.